A 173-amino-acid chain; its full sequence is Putative metal-dependent hydrolase OB0413 (173 aa).

The Zn(2+) site is built by His-64, His-155, and His-159.

This sequence belongs to the metal hydrolase YfiT family. As to quaternary structure, homodimer. The cofactor is Zn(2+).

The protein resides in the cytoplasm. Possible metal-dependent hydrolase. The chain is Putative metal-dependent hydrolase OB0413 from Oceanobacillus iheyensis (strain DSM 14371 / CIP 107618 / JCM 11309 / KCTC 3954 / HTE831).